The primary structure comprises 617 residues: Acetolactate synthase large subunit (617 aa).

Glu-71 provides a ligand contact to thiamine diphosphate. Residues Arg-173, 281–302, and 324–343 contribute to the FAD site; these read HGTA…VGAR and EIDP…VLGD. The interval 413–492 is thiamine pyrophosphate binding; it reads QHQMWAAQHL…VKVVIVNNHW (80 aa). Residues Asp-463 and Asn-490 each contribute to the Mg(2+) site.

The protein belongs to the TPP enzyme family. Dimer of large and small chains. The cofactor is Mg(2+). It depends on thiamine diphosphate as a cofactor.

The enzyme catalyses 2 pyruvate + H(+) = (2S)-2-acetolactate + CO2. It functions in the pathway amino-acid biosynthesis; L-isoleucine biosynthesis; L-isoleucine from 2-oxobutanoate: step 1/4. It participates in amino-acid biosynthesis; L-valine biosynthesis; L-valine from pyruvate: step 1/4. This chain is Acetolactate synthase large subunit (ilvB), found in Parasynechococcus marenigrum (strain WH8102).